Here is a 323-residue protein sequence, read N- to C-terminus: MKWKKYTIETTTAAEDFMSSMLMELGIEGIEIEDNIPLTKEDQADMFIDFLPELPPDEGISHVSFYIEDDGSDQSDMLRKVKLGLEDLRDTVDVGSGVISSSETEDLDWINNWKKYFSSFTIGDILIKPTWEEVKPEDADKFMIEIDPGISFGTGKHETTQLCIKQLIKYIEGAKEAPTVLDVGCGSGILSIVALKLGAKEVVGTDLDADCMISTRDNMQVNHLDEKLGTFYVGNLIDDTELQKKVGTEKYDIVVANILADVIIPMAPVIPDRLKEGGYFITSGIIDFKENEVKEAIEAAGLKVIEINHQGEWVNITAQKLTK.

S-adenosyl-L-methionine-binding residues include threonine 160, glycine 184, aspartate 206, and asparagine 257.

The protein belongs to the methyltransferase superfamily. PrmA family.

It is found in the cytoplasm. It catalyses the reaction L-lysyl-[protein] + 3 S-adenosyl-L-methionine = N(6),N(6),N(6)-trimethyl-L-lysyl-[protein] + 3 S-adenosyl-L-homocysteine + 3 H(+). Methylates ribosomal protein L11. This chain is Ribosomal protein L11 methyltransferase, found in Agathobacter rectalis (strain ATCC 33656 / DSM 3377 / JCM 17463 / KCTC 5835 / VPI 0990) (Eubacterium rectale).